A 1254-amino-acid polypeptide reads, in one-letter code: Zinc finger protein BRUTUS-like At1g18910 (1254 aa).

A disordered region spans residues 1 to 30 (MGVGDPLPLPPEKNRREVNKPPDIASTSSS). Residues 454–474 (IHFLPLGLLKCVIMWFSAQLP) form a helical membrane-spanning segment. The CHY-type zinc-finger motif lies at 1013-1082 (PHKLIFGCKH…ASCSNISCSS (70 aa)). Positions 1020, 1022, 1033, 1034, 1040, 1043, 1044, 1050, 1062, 1065, 1075, 1080, 1089, 1092, 1103, 1104, 1107, 1110, 1122, 1123, 1126, 1129, 1137, and 1139 each coordinate Zn(2+). A CTCHY-type zinc finger spans residues 1084 to 1147 (MGKYYCKICK…VCREKCLEDN (64 aa)). The RING-type; atypical zinc-finger motif lies at 1148-1190 (CPICHEYIFTSNSPVKALPCGHVMHSTCFQEYTCSHYTCPICS).

In terms of assembly, binds zinc and iron ions.

The protein resides in the membrane. It is found in the nucleus. Its pathway is protein modification; protein ubiquitination. In terms of biological role, probable E3 ubiquitin-protein ligase that may regulate the response to iron deficiency and thus contributes to iron homeostasis. This chain is Zinc finger protein BRUTUS-like At1g18910, found in Arabidopsis thaliana (Mouse-ear cress).